A 409-amino-acid chain; its full sequence is Nucleoprotein (409 aa).

Disordered regions lie at residues 1 to 32, 44 to 63, 120 to 145, and 164 to 193; these read MASGKTTGKTDAPAPVIKLGGPKPPKVGSSGN, LNSPPPKFEGSGVPDNENLK, GADTKSRSNQGTRDPDKFDQYPLRFS, and RSGRSTAASSAASSRAPSRDGSRGRRSGAE. Positions 15-31 are enriched in low complexity; sequence PVIKLGGPKPPKVGSSG. The RNA-binding stretch occupies residues 29 to 160; the sequence is SSGNASWFQA…GNFRWDFIPI (132 aa). Residues 31–156 form the CoV N NTD domain; the sequence is GNASWFQALK…GGPDGNFRWD (126 aa). Residues 164–179 are compositionally biased toward low complexity; sequence RSGRSTAASSAASSRA. Basic and acidic residues predominate over residues 180-192; that stretch reads PSRDGSRGRRSGA. Residue Ser-190 is modified to Phosphoserine; by host. The region spanning 215-331 is the CoV N CTD domain; it reads TKAKADEMAH…QCVDGVGTRP (117 aa). A dimerization region spans residues 226–333; sequence RYCKRTIPPG…VDGVGTRPKD (108 aa). A disulfide bridge connects residues Cys-320 and Cys-323. A disordered region spans residues 326–409; sequence GVGTRPKDDE…GDSALGENEL (84 aa). The segment covering 341–355 has biased composition (polar residues); it reads RPNSRPATRTSSPAP. The span at 358–367 shows a compositional bias: basic residues; sequence QRQKKEKKSK. Residues 368-384 are compositionally biased toward basic and acidic residues; it reads KQDDEVDKALTSDEERN. Residue Thr-378 is modified to Phosphothreonine; by host. At Ser-379 the chain carries Phosphoserine; by host.

Belongs to the gammacoronavirus nucleocapsid protein family. Homooligomer. Both monomeric and oligomeric forms interact with RNA. Interacts with protein M. Interacts with NSP3; this interaction serves to tether the genome to the newly translated replicase-transcriptase complex at a very early stage of infection. Post-translationally, ADP-ribosylated. The ADP-ribosylation is retained in the virion during infection. In terms of processing, phosphorylated on serine and threonine residues.

It is found in the virion. Its subcellular location is the host endoplasmic reticulum-Golgi intermediate compartment. The protein localises to the host Golgi apparatus. Its function is as follows. Packages the positive strand viral genome RNA into a helical ribonucleocapsid (RNP) and plays a fundamental role during virion assembly through its interactions with the viral genome and membrane protein M. Plays an important role in enhancing the efficiency of subgenomic viral RNA transcription as well as viral replication. The sequence is that of Nucleoprotein from Avian infectious bronchitis virus (strain H120) (IBV).